The primary structure comprises 462 residues: MGKEKAHVNVVVIGHVDSGKSTTTGHLIYKCGGIDKRTIEKFEKEAAELGKGSFKYAWVLDKLKAERERGITIDIALWKSETPKYMVTVIDAPGHRDFIKNMITGTSQADCAILIIAGGTGEFEAGISKDGQTREHALLAFTLGVRQLIVAVNKMDTTNWSEARFNEIVKETSNFIKKVGYNPKTVAFVPISGWHGDNMLEPSTNMPWYKGWSKEVKGSSSPATGKTLVDAIDAIEPPVRPSDKPLRLPLQDVYKIGGIGTVPVGRVETGIIKPGMVVSFAPSNVTTEVKSVEMHHEQLAEGLPGDNVGFNVKNVSVKDIRRGDVASDSKNDPAKEAASFNAQVIVLNHPGQIGAGYAPVLDCHTAHIACKFSELIEKIDRRTGKTMEAAPKFVKSGDAAIVKLVPSKPMCVESYNEYPPLGRFAVRDMRQTVAVGVIKSVEKTEGKGGKVTKSAEKAAKKK.

At glycine 2 the chain carries N,N,N-trimethylglycine. Lysine 3 carries the N6,N6-dimethyllysine; alternate modification. At lysine 3 the chain carries N6-methyllysine; alternate. One can recognise a tr-type G domain in the interval 5 to 242; sequence KAHVNVVVIG…DAIEPPVRPS (238 aa). Positions 14-21 are G1; that stretch reads GHVDSGKS. 14-21 provides a ligand contact to GTP; sequence GHVDSGKS. An N6-methyllysine modification is found at lysine 30. Positions 70–74 are G2; that stretch reads GITID. Lysine 79 carries the post-translational modification N6,N6,N6-trimethyllysine. The interval 91 to 94 is G3; it reads DAPG. Residues 91 to 95 and 153 to 156 contribute to the GTP site; these read DAPGH and NKMD. Positions 153-156 are G4; sequence NKMD. The segment at 192 to 194 is G5; the sequence is SGW. Lysine 318 is subject to N6,N6-dimethyllysine; alternate. At lysine 318 the chain carries N6-methyllysine; alternate. Lysine 392 is subject to N6-methyllysine.

The protein belongs to the TRAFAC class translation factor GTPase superfamily. Classic translation factor GTPase family. EF-Tu/EF-1A subfamily.

The protein resides in the cytoplasm. Its function is as follows. This protein promotes the GTP-dependent binding of aminoacyl-tRNA to the A-site of ribosomes during protein biosynthesis. The polypeptide is Elongation factor 1-alpha (TEF1) (Serendipita indica (Root endophyte fungus)).